The chain runs to 971 residues: MQSNLLKVLGVLAIVATLVCFIFAALGMIGAVRVGNGCYMRYSKDGNGSTDSITSTITLNANANYVNISKMLPDGTTKLIPDPNRYGEWLNTQVLVEKNQSVNLQVVGQVSLCLAYLPKNNLQFTERTRPGKSNLDDSGQMIPIPRVQDANSPPISLIMDAKNNEWRNIAELYANDKVLVSVSPNFANTDATVDDVFKGVKVTKDCTQGKTSYYPICGKYSIYSGKYVTACELKQNYWKGNVHREECYCVFGCIYKEDSDPWVCDMANAASHCCTSLVCDSLPAWINHYSNMPEAYKDDGSFTFSWSDKSKNLLIEYEDLQCSNNVNIPPNGQCPDIVNNRSPKDKNYIGGVSCTSGICKDGDFQKNRKFWYTADGKGGKGPTGLIYQMNDIGSVSQALPSKLEFAKFVPETEQPPEYKDKNGKYLYKVIYNIPFNSNIEKSYLQYRLWSPTSQDASKNTGGYVLNIKQTKCYRENGNSFKDIFDDRGRVQYIIVKSSENPNTSGKTYSPQGINVDSDGKSHFNANESGYIWMKILNDPSNNLKDYKDSEGSYKVHFSTSLKVGSFTIKVMNPLLQLFKTKVQDAATSIFKNMVCYKATDNSSCTNFFTYIKAILILYVMTYGAMFLLGFAKINQKELVIRIAKIGVVSGLINGNTFEFFNNYLFDAITNFSDSIIANMSGYSLFTSTNTISNPFMFLDAIMSKIFFSQTFIAQLLSLLSLGLSGIIYFIITFIAICIVIITTLRAIAVYIMAFMATCILIGIAPLFISFLLFDFTRYLFDNWVRFTIRYMIEPVVMMAGIIVLTQLFTIYLDFVLGYSVCWKCTLPIKIPFIGTILPIALLNVPIFCINWFAPWGMDYMSGMMGVNMQNIVALVIIAYGMYGYVEFSGRMVAKLTSAAGPSATQIGGRMSHDAGQKVLSQIGMDYRTRQGITGRAKSRLEQRNRTLEHAEQNSKKYKKRIGENTNEETLK.

The N-terminal stretch at 1–24 is a signal peptide; that stretch reads MQSNLLKVLGVLAIVATLVCFIFA. The tract at residues 127-146 is disordered; that stretch reads RTRPGKSNLDDSGQMIPIPR. Helical transmembrane passes span 611-631, 721-741, 753-773, 795-815, 832-852, and 865-885; these read IKAI…LGFA, LGLS…IVII, AFMA…FLLF, VVMM…LDFV, FIGT…INWF, and GVNM…YGYV. A disordered region spans residues 933–971; the sequence is TGRAKSRLEQRNRTLEHAEQNSKKYKKRIGENTNEETLK. The span at 938 to 954 shows a compositional bias: basic and acidic residues; the sequence is SRLEQRNRTLEHAEQNS.

This sequence belongs to the TrbL/VirB6 family.

The protein localises to the cell membrane. This is an uncharacterized protein from Rickettsia prowazekii (strain Madrid E).